The primary structure comprises 4699 residues: PKS-NRPS hybrid synthetase cheA (4699 aa).

A compositionally biased stretch (acidic residues) spans 1-21 (MSDNDDEWNGFSDDNGEDDGP). 2 disordered regions span residues 1-38 (MSDN…WDVP) and 136-165 (DGWR…HTQH). The segment covering 136–148 (DGWRFHSHPDPQH) has biased composition (basic and acidic residues). Positions 172 to 520 (SLDTIAELSN…VQQNVEEMAK (349 aa)) are N-terminal acylcarrier protein transacylase domain (SAT). A disordered region spans residues 625-836 (PLPSVEDNVA…AGAPGARVTR (212 aa)). Positions 674–688 (TQGSQGSQGRRTPGS) are enriched in low complexity. A compositionally biased stretch (basic residues) spans 724-737 (PKRRGRPPGSKNKK). In terms of domain architecture, Ketosynthase family 3 (KS3) spans 737-1138 (KKDQAPAPAE…GANAHAILEA (402 aa)). Residues 764–777 (ASAPRRGLRAAPAA) show a composition bias toward low complexity. Residues 802–816 (ATASTPRAQSDQGTG) show a composition bias toward polar residues. Active-site for beta-ketoacyl synthase activity residues include Cys873, His1012, and His1058. The malonyl-CoA:ACP transacylase (MAT) domain stretch occupies residues 1250-1573 (VFTGQGAQWP…VGTLLRQRDA (324 aa)). Positions 1644–1777 (NELLGTRIMD…ANLIISLGEP (134 aa)) are N-terminal hotdog fold. A PKS/mFAS DH domain is found at 1644–1947 (NELLGTRIMD…TKPLVPPTPS (304 aa)). Positions 1645 to 1941 (ELLGTRIMDN…QLQGLHTKPL (297 aa)) are dehydratase (DH) domain. Residue His1676 is the Proton acceptor; for dehydratase activity of the active site. Residues 1794 to 1947 (MLDVPAERFY…TKPLVPPTPS (154 aa)) are C-terminal hotdog fold. Asp1854 (proton donor; for dehydratase activity) is an active-site residue. The methyltransferase (MT) domain stretch occupies residues 2050 to 2241 (LNRFYIEALG…RNTGFSGADE (192 aa)). Residues 2794–2967 (TYWLVGLTGG…PAAAVNIGAV (174 aa)) are ketoreductase (KR) domain. Residues 3076–3153 (DASEILEDAY…ALFELVKERA (78 aa)) enclose the Carrier 1 domain. Ser3113 bears the O-(pantetheine 4'-phosphoryl)serine mark. Residues 3164-3265 (EQPDQVKSPR…PVASSPDAGL (102 aa)) are disordered. Polar residues-rich tracts occupy residues 3200-3209 (SLDQGSSWDS) and 3218-3233 (GHDS…SSPI). The interval 3268 to 3696 (SVPLSFSQAR…PISRISKPPL (429 aa)) is condensation (C) domain. The segment at 3730–4113 (IQAHPDKLAL…GGLILEGRID (384 aa)) is adenylation (A) domain. A Carrier 2 domain is found at 4236-4316 (EGLPAMQHLI…TMAALVASGS (81 aa)). The interval 4241–4313 (MQHLIKQLWE…TLETMAALVA (73 aa)) is thiolation and peptide carrier (T) domain. Ser4276 carries the O-(pantetheine 4'-phosphoryl)serine modification. Residues 4367-4598 (LTGSTGFLGR…ISVHTVAAAI (232 aa)) form a reductase (R) domain region.

This sequence in the C-terminal section; belongs to the NRP synthetase family.

It participates in secondary metabolite biosynthesis. PKS-NRPS hybrid synthetase; part of the gene cluster that mediates the biosynthesis of chaetoglobosin A which has a unique inhibitory activity against actin polymerization in mammalian cells. Chaetoglobosin A and its intermediates are involved in the morphological differentiation of C.globosum. The first step of the pathway is the synthesis of prochaetoglobosin I via condensation of one acetyl-CoA, 8 malonyl-CoA, and a L-tryptophan molecule by the PKS-NRPS hybrid synthetase cheA, followed by reduction of backbone double bond to install desired geometry by the enoyl reductase cheB. Further multiple oxidation steps performed by the cytochrome P450 monooxygenases cheE and cheG, as well as by the FAD-linked oxidoreductase cheF, lead to the formation of chaetoglobosin A. Depending on the order of action of these reductases, distinct intermediates can be identified. Within the pathway, the cytochrome P450 monooxygenase cheE catalyzes a stereospecific epoxidation on prochaetoglobosin I, cytoglobosin D, and chaetoglobosin J intermediates. The FAD-linked oxidoreductase cheF performs dehydrogenation of the C-20 hydroxyl groups in the 20-dihyrochaetoglobosin A and cytoglobosin D intermediates. Finally, the cytochrome P450 monooxygenase cheG can catalyze the stereospecific dihydroxylation of prochaetoglobosin I and prochaetoglobosin IV at C-19 and C-20, respectively. The Diels-Alderase cheD may play a role in the post-PKS-NRPS biosynthetic steps catalyzing Diels-Alder cyclization. This Chaetomium globosum (strain ATCC 6205 / CBS 148.51 / DSM 1962 / NBRC 6347 / NRRL 1970) (Soil fungus) protein is PKS-NRPS hybrid synthetase cheA.